Consider the following 316-residue polypeptide: Ferrochelatase (316 aa).

2 residues coordinate Fe cation: His190 and Glu271.

The protein belongs to the ferrochelatase family.

The protein resides in the cytoplasm. It carries out the reaction heme b + 2 H(+) = protoporphyrin IX + Fe(2+). It functions in the pathway porphyrin-containing compound metabolism; protoheme biosynthesis; protoheme from protoporphyrin-IX: step 1/1. In terms of biological role, catalyzes the ferrous insertion into protoporphyrin IX. This chain is Ferrochelatase, found in Sulfurimonas denitrificans (strain ATCC 33889 / DSM 1251) (Thiomicrospira denitrificans (strain ATCC 33889 / DSM 1251)).